The primary structure comprises 107 residues: Large ribosomal subunit protein uL24 (107 aa).

It belongs to the universal ribosomal protein uL24 family. In terms of assembly, part of the 50S ribosomal subunit.

Its function is as follows. One of two assembly initiator proteins, it binds directly to the 5'-end of the 23S rRNA, where it nucleates assembly of the 50S subunit. In terms of biological role, one of the proteins that surrounds the polypeptide exit tunnel on the outside of the subunit. The polypeptide is Large ribosomal subunit protein uL24 (Kosmotoga olearia (strain ATCC BAA-1733 / DSM 21960 / TBF 19.5.1)).